Reading from the N-terminus, the 320-residue chain is ATP-dependent 6-phosphofructokinase (320 aa).

Residue Gly-12 participates in ATP binding. ADP is bound by residues 22 to 26 (RGVVR) and 55 to 60 (RYSVSD). Residues 73–74 (RF) and 103–106 (GDGS) contribute to the ATP site. Asp-104 serves as a coordination point for Mg(2+). A substrate-binding site is contributed by 126-128 (TID). Asp-128 (proton acceptor) is an active-site residue. Arg-155 is a binding site for ADP. Substrate-binding positions include Arg-163 and 170–172 (MGR). ADP-binding positions include 186 to 188 (GCE), Lys-212, and 214 to 216 (KKH). Substrate is bound by residues Glu-223, Arg-244, and 250–253 (HIQR).

Belongs to the phosphofructokinase type A (PFKA) family. ATP-dependent PFK group I subfamily. Prokaryotic clade 'B1' sub-subfamily. In terms of assembly, homotetramer. Mg(2+) serves as cofactor.

The protein resides in the cytoplasm. The catalysed reaction is beta-D-fructose 6-phosphate + ATP = beta-D-fructose 1,6-bisphosphate + ADP + H(+). It participates in carbohydrate degradation; glycolysis; D-glyceraldehyde 3-phosphate and glycerone phosphate from D-glucose: step 3/4. Its activity is regulated as follows. Allosterically activated by ADP and other diphosphonucleosides, and allosterically inhibited by phosphoenolpyruvate. Functionally, catalyzes the phosphorylation of D-fructose 6-phosphate to fructose 1,6-bisphosphate by ATP, the first committing step of glycolysis. The protein is ATP-dependent 6-phosphofructokinase of Salmonella gallinarum (strain 287/91 / NCTC 13346).